A 2472-amino-acid polypeptide reads, in one-letter code: Spectrin alpha chain, non-erythrocytic 1 (2472 aa).

Met1 is modified (N-acetylmethionine). Spectrin repeat units follow at residues 45-146, 150-251, 256-358, 361-465, 468-570, 574-676, 679-781, 785-888, and 891-961; these read RFQF…IKLL, KLVQ…QGKL, EVQR…ARLD, YRLQ…QYEQ, DLQL…AQLA, HLQQ…KLRE, QQQQ…QKLA, RLQQ…DLED, and QAQQ…QQVA. Ser587 carries the post-translational modification Phosphoserine. Position 637 is an N6-acetyllysine (Lys637). An N6-acetyllysine modification is found at Lys803. Phosphoserine is present on residues Ser924, Ser982, Ser999, Ser1029, Ser1031, and Ser1041. The region spanning 967-1026 is the SH3 domain; that stretch reads TGKELVLALYDYQEKSPREVTMKKGDILTLLNSTNKDWWKVEVNDRQGFVPAAYVKKLDP. A Spectrin 10 repeat occupies 1096–1166; it reads LFREANELQQ…LESEGLMAEE (71 aa). The residue at position 1176 (Tyr1176) is a Phosphotyrosine. Ser1190, Ser1207, Ser1217, Ser1291, Ser1306, Ser1323, and Ser1338 each carry phosphoserine. Residues 1233-1336 form a Spectrin 11 repeat; the sequence is HEVQRFHRDA…RADQRKAKLG (104 aa). Spectrin repeat units lie at residues 1339-1441 and 1446-1549; these read HDLQ…RMML and ELQL…KLGE. N6-acetyllysine is present on Lys1519. A phosphoserine mark is found at Ser1550, Ser1557, Ser1578, Ser1615, and Ser1647. Spectrin repeat units lie at residues 1552–1656, 1659–1762, 1764–1868, 1871–1974, 1978–2081, 2092–2194, and 2206–2310; these read TLQQ…KLKE, KQQN…KLSE, HRLH…RLEE, EYQQ…KLDE, FLQF…KLLE, LFLT…LELQ, and LRQE…NLEQ. Thr2020 is subject to Phosphothreonine. At Lys2052 the chain carries N6-acetyllysine. Thr2066 is subject to Phosphothreonine. EF-hand domains lie at 2323-2358, 2366-2401, and 2404-2439; these read EALK…LGYD, EPDP…RETE, and KSSE…EQAD. Residues Asp2336, Asp2338, Ser2340, Arg2342, Glu2347, Asp2379, Asn2381, Asp2383, His2385, and Glu2390 each coordinate Ca(2+). Lys2421 is subject to N6-acetyllysine.

The protein belongs to the spectrin family. As to quaternary structure, like erythrocyte spectrin, the spectrin-like proteins are capable of forming dimers which can further associate to tetramers. Interacts (via C-terminal spectrin repeats) with TRPC4. Interacts with CALM and EMD. Interacts with isoform 1 of ACP1. Identified in a complex with ACTN4, CASK, IQGAP1, MAGI2, NPHS1 and SPTBN1. Interacts with SHANK3 (via ANK repeats). Interacts with CLN3; this interaction regulates the fodrin localization at the plasma membrane. Phosphorylation of Tyr-1176 decreases sensitivity to cleavage by calpain in vitro. As to expression, expressed in the foot process layer of podocytes in the kidney glomerulus and in tubules (at protein level).

It localises to the cytoplasm. It is found in the cytoskeleton. Its subcellular location is the cell cortex. Its function is as follows. Fodrin, which seems to be involved in secretion, interacts with calmodulin in a calcium-dependent manner and is thus candidate for the calcium-dependent movement of the cytoskeleton at the membrane. This Rattus norvegicus (Rat) protein is Spectrin alpha chain, non-erythrocytic 1 (Sptan1).